The chain runs to 259 residues: Protein snail homolog Sna (259 aa).

An SNAG domain region spans residues Met-1–Ser-20. The segment at Asp-71–Ala-113 is disordered. 5 C2H2-type zinc fingers span residues Phe-119 to His-141, Phe-150 to His-172, Cys-176 to His-198, Phe-204 to His-226, and Tyr-232 to Cys-255.

It belongs to the snail C2H2-type zinc-finger protein family. In terms of assembly, interacts (via SNAG domain) with limd1 (via LIM domains), wtip (via LIM domains) and ajuba (via LIM domains). Interacts with elp3; the interaction inhibits snai1 ubiquitination and promotes snai1 stability. Post-translationally, ubiquitinated. In terms of tissue distribution, maternal expression is nearly completely restricted to the vegetal hemisphere. Zygotic expression begins in the dorsal marginal zone just before gastrulation (stage 9), and is almost completely absent in the animal hemisphere. At mid-gastrula (stage 11-11.5), expression begins in the ectoderm in an arc surrounding the prospective neural plate. From stage 12, anterior expression is down-regulated, while levels are increased in the prospective neural crest.

It localises to the nucleus. Its function is as follows. Transcriptional repressor. Acts upstream of snai2/slug, zic5 and other neural crest markers in the specification of the neural crest and neural crest migration. Involved in embryonic mesoderm formation. The protein is Protein snail homolog Sna (snai1) of Xenopus laevis (African clawed frog).